We begin with the raw amino-acid sequence, 1400 residues long: Bromodomain-containing protein 4 (1400 aa).

A disordered region spans residues 1–58; sequence MSTESGPGTRLRNLPVMGDGLETSQMSTTQAQAQPQPANAASTNPPPPETSNPNKPKR. Residues 23-43 show a composition bias toward low complexity; the sequence is TSQMSTTQAQAQPQPANAAST. Residues 58-164 form the Bromo 1 domain; that stretch reads RQTNQLQYLL…KLFLQKINEL (107 aa). Lysine 99 is covalently cross-linked (Glycyl lysine isopeptide (Lys-Gly) (interchain with G-Cter in SUMO2)). Disordered regions lie at residues 176–353 and 461–616; these read AKGR…KISE and EPEE…YEEK. Positions 197–212 are enriched in low complexity; the sequence is PNTTQASTSPQTQTPQ. Residues 244 to 267 show a composition bias toward pro residues; that stretch reads PPQPLQTPSPVPPQPPPPPAPVPQ. A compositionally biased stretch (basic and acidic residues) spans 321 to 337; it reads PRRESSRPVKPPKKDVP. A Bromo 2 domain is found at 349–458; that stretch reads SKISEQLKCC…DVFEMRFAKM (110 aa). Serine 471 carries the post-translational modification Phosphoserine. The span at 479-498 shows a compositional bias: low complexity; that stretch reads KVVAPPSSSDSSSDSSSDSD. 3 positions are modified to phosphoserine; by CK2: serine 485, serine 489, and serine 493. Residues 485 to 504 are NPS region; it reads SSSDSSSDSSSDSDSSTDDS. Serine 495 carries the post-translational modification Phosphoserine. Residues serine 499, serine 500, and serine 504 each carry the phosphoserine; by CK2 modification. The tract at residues 525–580 is BID region; sequence QLAALSQPQQNKPKKKEKDKKEKKKEKHKKKEEVEENKKSKTKELPPKKTKKNNSS. Residues 536–554 show a composition bias toward basic residues; the sequence is KPKKKEKDKKEKKKEKHKK. The span at 555–571 shows a compositional bias: basic and acidic residues; it reads KEEVEENKKSKTKELPP. Lysine 586 is covalently cross-linked (Glycyl lysine isopeptide (Lys-Gly) (interchain with G-Cter in SUMO2)). Residues 601–683 enclose the NET domain; the sequence is ESEEEDKCKP…SCLRKKRKPQ (83 aa). Phosphoserine is present on serine 602. Positions 606 to 616 are enriched in basic and acidic residues; it reads DKCKPMSYEEK. Residues lysine 646 and lysine 695 each participate in a glycyl lysine isopeptide (Lys-Gly) (interchain with G-Cter in SUMO2) cross-link. The disordered stretch occupies residues 675–1125; that stretch reads CLRKKRKPQA…GCPPASPAAV (451 aa). The span at 700-713 shows a compositional bias: low complexity; it reads SSSESESTSESSSS. A compositionally biased stretch (basic residues) spans 725–745; that stretch reads KSKKKGHTGRDQKKHHHHHHP. 4 stretches are compositionally biased toward pro residues: residues 748-787, 835-848, 883-892, and 900-909; these read QPAP…PPSM, PELP…PEHS, PPKPTRPPAV, and PLLPQPPMAQ. Over residues 928 to 938 the composition is skewed to low complexity; that stretch reads MQMQLYLQQLQ. Pro residues-rich tracts occupy residues 955–966, 975–1000, and 1013–1037; these read QPPPPLPPPPHP, PQPP…PRPV, and QPPP…PQPA. Residues 1050-1400 are C-terminal (CTD) region; the sequence is RHHKSDPYSA…LLSIFEENLF (351 aa). Lysine 1053 participates in a covalent cross-link: Glycyl lysine isopeptide (Lys-Gly) (interchain with G-Cter in SUMO2). Residues 1075–1084 show a composition bias toward polar residues; that stretch reads QMPQFQSLTH. A compositionally biased stretch (low complexity) spans 1085–1095; the sequence is QSPPQQNVQPK. Lysine 1147 bears the N6-acetyllysine; alternate mark. Lysine 1147 is covalently cross-linked (Glycyl lysine isopeptide (Lys-Gly) (interchain with G-Cter in SUMO1); alternate). Residue lysine 1147 forms a Glycyl lysine isopeptide (Lys-Gly) (interchain with G-Cter in SUMO2); alternate linkage. Phosphoserine occurs at positions 1153 and 1162. A disordered region spans residues 1155–1377; that stretch reads IIRSEPFSTS…KREQERRRRE (223 aa). Basic and acidic residues predominate over residues 1211 to 1232; the sequence is PDKDKQKQEPKTPVAPKKDLKI. A Glycyl lysine isopeptide (Lys-Gly) (interchain with G-Cter in SUMO2) cross-link involves residue lysine 1233. Phosphoserine occurs at positions 1237 and 1240. A compositionally biased stretch (low complexity) spans 1247 to 1258; the sequence is TTPSSTAKSSSD. Residues 1259 to 1320 are compositionally biased toward basic and acidic residues; the sequence is SFEHFRRAAR…AHEEARRRQE (62 aa). Positions 1321–1357 are enriched in low complexity; the sequence is QQQQQQQQRQEQQQQQQQAAAVAAASAPQAQSSQPQS. The segment covering 1361–1377 has biased composition (basic and acidic residues); the sequence is QQRELARKREQERRRRE.

Belongs to the BET family. Binds acetylated histone H4. Interacts with p53/TP53; the interaction is direct. Interacts (via CTD region) with CDK9 and CCNT1, acting as an associated component of P-TEFb complex. Interacts with RELA (when acetylated at 'Lys-310'). Interacts (via NET domain) with NSD3, CHD4, BICRA and ATAD5. The interaction with BICRA bridges BRD4 to the GBAF complex. Interacts (via NET domain) with JMJD6 (via JmjC and N-terminal domains); the interaction is stronger in presence of ssRNA and recruits JMJD6 on distal enhancers. Interacts with NSD3. Interacts with NIPBL. In terms of processing, phosphorylation by CK2 disrupt the intramolecular binding between the bromo domain 2 and the NPS region and promotes binding between the NPS and the BID regions, leading to activate the protein and promote binding to acetylated histones. In absence of phosphorylation, BRD4 does not localize to p53/TP53 target gene promoters, phosphorylation promoting recruitment to p53/TP53 target promoters.

It is found in the nucleus. Its subcellular location is the chromosome. Its function is as follows. Chromatin reader protein that recognizes and binds acetylated histones and plays a key role in transmission of epigenetic memory across cell divisions and transcription regulation. Remains associated with acetylated chromatin throughout the entire cell cycle and provides epigenetic memory for postmitotic G1 gene transcription by preserving acetylated chromatin status and maintaining high-order chromatin structure. During interphase, plays a key role in regulating the transcription of signal-inducible genes by associating with the P-TEFb complex and recruiting it to promoters. Also recruits P-TEFb complex to distal enhancers, so called anti-pause enhancers in collaboration with JMJD6. BRD4 and JMJD6 are required to form the transcriptionally active P-TEFb complex by displacing negative regulators such as HEXIM1 and 7SKsnRNA complex from P-TEFb, thereby transforming it into an active form that can then phosphorylate the C-terminal domain (CTD) of RNA polymerase II. Regulates differentiation of naive CD4(+) T-cells into T-helper Th17 by promoting recruitment of P-TEFb to promoters. Promotes phosphorylation of 'Ser-2' of the C-terminal domain (CTD) of RNA polymerase II. According to a report, directly acts as an atypical protein kinase and mediates phosphorylation of 'Ser-2' of the C-terminal domain (CTD) of RNA polymerase II; these data however need additional evidences in vivo. In addition to acetylated histones, also recognizes and binds acetylated RELA, leading to further recruitment of the P-TEFb complex and subsequent activation of NF-kappa-B. Also acts as a regulator of p53/TP53-mediated transcription: following phosphorylation by CK2, recruited to p53/TP53 specific target promoters. The sequence is that of Bromodomain-containing protein 4 (Brd4) from Mus musculus (Mouse).